Here is a 305-residue protein sequence, read N- to C-terminus: NADH-ubiquinone oxidoreductase chain 1 (305 aa).

Helical transmembrane passes span 3–23 (WVAVIVSIIPFVGVLLAVGFY), 71–91 (VGPFILAPALMLAISLLGWLL), 99–119 (VFYVFGVILFMVITSVSVYGV), 145–165 (YEIPMGFIFFCVVLCSGVFMF), 175–195 (LFFFFLPLCVVMLVWMLCMLA), 221–241 (GGGFAVMFIAEYSSILLSSVM), 246–266 (FFGGNEALVGFFMMVFAIFFV), and 285–305 (WTVLLCVMLTASVCVVVLVGV).

The protein belongs to the complex I subunit 1 family.

The protein localises to the mitochondrion inner membrane. The enzyme catalyses a ubiquinone + NADH + 5 H(+)(in) = a ubiquinol + NAD(+) + 4 H(+)(out). Core subunit of the mitochondrial membrane respiratory chain NADH dehydrogenase (Complex I) that is believed to belong to the minimal assembly required for catalysis. Complex I functions in the transfer of electrons from NADH to the respiratory chain. The immediate electron acceptor for the enzyme is believed to be ubiquinone. The chain is NADH-ubiquinone oxidoreductase chain 1 (ND1) from Mytilus edulis (Blue mussel).